A 152-amino-acid chain; its full sequence is Cell division protein SepF (152 aa).

The segment at 21-56 (EYIETEQDHPEEHEQQKDKQPAYAQKPQGKQNVVSL) is disordered. Positions 26–40 (EQDHPEEHEQQKDKQ) are enriched in basic and acidic residues.

Belongs to the SepF family. Homodimer. Interacts with FtsZ.

It localises to the cytoplasm. Its function is as follows. Cell division protein that is part of the divisome complex and is recruited early to the Z-ring. Probably stimulates Z-ring formation, perhaps through the cross-linking of FtsZ protofilaments. Its function overlaps with FtsA. This chain is Cell division protein SepF, found in Bacillus velezensis (strain DSM 23117 / BGSC 10A6 / LMG 26770 / FZB42) (Bacillus amyloliquefaciens subsp. plantarum).